Here is a 467-residue protein sequence, read N- to C-terminus: Chlorophenol O-methyltransferase (467 aa).

Positions Met1–Ser41 are disordered. Composition is skewed to polar residues over residues Ser8–Thr21 and Leu31–Ser41. An S-adenosyl-L-methionine-binding site is contributed by Asp320. His368 (proton acceptor) is an active-site residue.

The protein belongs to the class I-like SAM-binding methyltransferase superfamily. Cation-independent O-methyltransferase family.

It catalyses the reaction 2,4,6-trichlorophenol + S-adenosyl-L-methionine = 2,4,6-trichloroanisole + S-adenosyl-L-homocysteine. Its activity is regulated as follows. S-adenosyl-L-homocysteine acts as a competitive inhibitor. Also strongly inhibited by low concentrations of several metal ions, such as Cu(2+), Hg(2+), Zn(2+), and Ag(+), and to a lesser extent by p-chloromercuribenzoic acid, but it is not significantly affected by several thiols or other thiol reagents. In terms of biological role, chlorophenol O-methyltransferase that methylates chlorophenols into chloroanisoles which are thought to be responsible for cork taint of wines. The only single chlorophenol (CP) methylated is 2-CP; neither 3-CP nor 4-CP are effective substrates. Within the dichlorophenols (DCPs), 2,4-DCP supports the highest rate of O-methylation, and the activity decreases in the following order: 2,3-DCP, 2,5-DCP, 2,6-DCP, and 3,4-DCP. Within the trichlorophenol (TCP) group, the maximal activity is observed with 2,3,4-TCP, whereas there is increasingly reduced activity with 2,4,5-TCP, 2,4,6-TCP, and 2,3,6-TCP. The only tetrachlorophenol (TeCP) that is methylated is 2,3,4,5-TeCP, since no activity can be detected with 2,3,4,6-TeCP and 2,3,5,6-TeCP. Is also able to methylate other halogenated phenols containing fluoro or bromo substituents, whereas other hydroxylated compounds, such as hydroxylated benzoic acids, hydroxybenzaldehydes, phenol, 2-metoxyphenol, and dihydroxybenzene, were not methylated. In Trichoderma longibrachiatum, this protein is Chlorophenol O-methyltransferase.